The following is a 440-amino-acid chain: UDP-N-acetylmuramoylalanine--D-glutamate ligase (440 aa).

Residue 113-119 (GTNGKST) coordinates ATP.

The protein belongs to the MurCDEF family.

The protein localises to the cytoplasm. The enzyme catalyses UDP-N-acetyl-alpha-D-muramoyl-L-alanine + D-glutamate + ATP = UDP-N-acetyl-alpha-D-muramoyl-L-alanyl-D-glutamate + ADP + phosphate + H(+). Its pathway is cell wall biogenesis; peptidoglycan biosynthesis. Its function is as follows. Cell wall formation. Catalyzes the addition of glutamate to the nucleotide precursor UDP-N-acetylmuramoyl-L-alanine (UMA). This is UDP-N-acetylmuramoylalanine--D-glutamate ligase (murD) from Buchnera aphidicola subsp. Acyrthosiphon pisum (strain APS) (Acyrthosiphon pisum symbiotic bacterium).